The chain runs to 68 residues: Large ribosomal subunit protein bL31 (68 aa).

Zn(2+) is bound by residues Cys16, Cys18, Cys36, and Cys39.

Belongs to the bacterial ribosomal protein bL31 family. Type A subfamily. As to quaternary structure, part of the 50S ribosomal subunit. Requires Zn(2+) as cofactor.

Binds the 23S rRNA. The sequence is that of Large ribosomal subunit protein bL31 from Dictyoglomus turgidum (strain DSM 6724 / Z-1310).